A 492-amino-acid chain; its full sequence is Cytochrome P450 26A1 (492 aa).

Residue C438 participates in heme binding.

Belongs to the cytochrome P450 family. Heme is required as a cofactor.

Its subcellular location is the endoplasmic reticulum membrane. It is found in the microsome membrane. The enzyme catalyses all-trans-retinoate + reduced [NADPH--hemoprotein reductase] + O2 = all-trans-(4S)-hydroxyretinoate + oxidized [NADPH--hemoprotein reductase] + H2O + H(+). Functionally, a cytochrome P450 monooxygenase involved in the metabolism of all-trans retinoic acid (atRA), a signaling molecule that binds to retinoic acid receptors and regulates gene transcription. Mechanistically, uses molecular oxygen inserting one oxygen atom into a substrate, and reducing the second into a water molecule, with two electrons provided by NADPH via cytochrome P450 reductase (CPR; NADPH-ferrihemoprotein reductase). Catalyzes the hydroxylation of carbon hydrogen bonds of atRA primarily at C-4. Has no activity toward 9-cis and 13-cis retinoic acid stereoisomers. May play a role in the oxidative metabolism of xenobiotics such as tazarotenic acid. The sequence is that of Cytochrome P450 26A1 (cyp26a1) from Danio rerio (Zebrafish).